The chain runs to 422 residues: Carboxypeptidase B2 (422 aa).

A signal peptide spans 1–21; that stretch reads MKLYGLGVLVAIILYEKHGLA. Residues 22-113 constitute a propeptide, activation peptide; the sequence is FQSGHVLSAL…QTSNDTVSPR (92 aa). 4 N-linked (GlcNAc...) asparagine glycosylation sites follow: N43, N72, N84, and N107. One can recognise a Peptidase M14 domain in the interval 121–418; it reads QYHSLNEIYS…AAVSKIAWHV (298 aa). A disulfide bond links C177 and C190. Zn(2+)-binding residues include H180 and E183. Residues 180–183 and R238 each bind substrate; that span reads HARE. The N-linked (GlcNAc...) asparagine glycan is linked to N240. 2 cysteine pairs are disulfide-bonded: C249/C273 and C264/C278. 255–256 serves as a coordination point for substrate; sequence NR. H309 contributes to the Zn(2+) binding site. Position 310 to 311 (310 to 311) interacts with substrate; sequence SY. N322 carries an N-linked (GlcNAc...) asparagine glycan. Y362 contacts substrate. The active-site Proton donor/acceptor is E384.

It belongs to the peptidase M14 family. It depends on Zn(2+) as a cofactor. In terms of tissue distribution, plasma; synthesized in the liver.

The protein resides in the secreted. It carries out the reaction Release of C-terminal Arg and Lys from a polypeptide.. Its activity is regulated as follows. TAFI/CPB2 is unique among carboxypeptidases in that it spontaneously inactivates with a short half-life, a property that is crucial for its role in controlling blood clot lysis. The zymogen is stabilized by interactions with the activation peptide. Release of the activation peptide increases a dynamic flap mobility and in time this leads to conformational changes that disrupt the catalytic site and expose a cryptic thrombin-cleavage site present at Arg-323. Functionally, cleaves C-terminal arginine or lysine residues from biologically active peptides such as kinins or anaphylatoxins in the circulation thereby regulating their activities. Down-regulates fibrinolysis by removing C-terminal lysine residues from fibrin that has already been partially degraded by plasmin. This chain is Carboxypeptidase B2 (Cpb2), found in Rattus norvegicus (Rat).